The primary structure comprises 66 residues: Large ribosomal subunit protein uL29 (66 aa).

It belongs to the universal ribosomal protein uL29 family.

The sequence is that of Large ribosomal subunit protein uL29 from Thermococcus gammatolerans (strain DSM 15229 / JCM 11827 / EJ3).